The chain runs to 275 residues: Dermonecrotic toxin LamSicTox-alphaIV1iii (275 aa).

Residue histidine 5 is part of the active site. Mg(2+)-binding residues include glutamate 25 and aspartate 27. The active-site Nucleophile is histidine 41. 2 disulfides stabilise this stretch: cysteine 45-cysteine 51 and cysteine 47-cysteine 192. Aspartate 85 provides a ligand contact to Mg(2+).

It belongs to the arthropod phospholipase D family. Class II subfamily. Mg(2+) serves as cofactor. As to expression, expressed by the venom gland.

It localises to the secreted. It carries out the reaction an N-(acyl)-sphingosylphosphocholine = an N-(acyl)-sphingosyl-1,3-cyclic phosphate + choline. It catalyses the reaction an N-(acyl)-sphingosylphosphoethanolamine = an N-(acyl)-sphingosyl-1,3-cyclic phosphate + ethanolamine. The enzyme catalyses a 1-acyl-sn-glycero-3-phosphocholine = a 1-acyl-sn-glycero-2,3-cyclic phosphate + choline. The catalysed reaction is a 1-acyl-sn-glycero-3-phosphoethanolamine = a 1-acyl-sn-glycero-2,3-cyclic phosphate + ethanolamine. Its function is as follows. Dermonecrotic toxins cleave the phosphodiester linkage between the phosphate and headgroup of certain phospholipids (sphingolipid and lysolipid substrates), forming an alcohol (often choline) and a cyclic phosphate. This toxin acts on sphingomyelin (SM). It may also act on ceramide phosphoethanolamine (CPE), lysophosphatidylcholine (LPC) and lysophosphatidylethanolamine (LPE), but not on lysophosphatidylserine (LPS), and lysophosphatidylglycerol (LPG). It acts by transphosphatidylation, releasing exclusively cyclic phosphate products as second products. Induces dermonecrosis, hemolysis, increased vascular permeability, edema, inflammatory response, and platelet aggregation. This Loxosceles amazonica (Recluse spider) protein is Dermonecrotic toxin LamSicTox-alphaIV1iii.